A 406-amino-acid chain; its full sequence is MTYYELVITNIKIMSINNQLRELIKSGTFAGILLIIAFTLAIIVSNNIFLTKYYSSFIYSKFSLTIGNVRLQTTFIELVNDGLMTFFFLLIGLEMKFHLVEGEHKNKKKLILPAVAALGGVVVPVLIYMFFNYDKPRLIKGWAIPIATDTAFVLGILSFFSRHISLELRAFIIGFSLIDDAFALIILALFYTKTINTPALLISSVIIFILFILNYRQVKQLFYYIIVGLLLWISMVESGIQGTLCGAIIALFIPVNIKGEFNTSFKKLENLTSPFVNYFILPLFVFMNSGILLEYFAFKGTCSNSILALIYGIIFGLFVGKQLGIMLFSYPFVKFKLCNLPSDTSWLKFYSIAILGGIGFTLSLFIGSITFESSCPSNSMRAAVIIGSLISALFGVAVLKYCTGKE.

Helical transmembrane passes span 29-49, 75-95, 111-131, 141-161, 170-190, 195-215, 220-240, 242-262, 278-298, 306-326, 349-369, and 382-402; these read FAGI…NNIF, FIEL…GLEM, ILPA…YMFF, GWAI…SFFS, AFII…LALF, INTP…ILNY, QLFY…ESGI, GTLC…GEFN, YFIL…YFAF, ILAL…LGIM, FYSI…IGSI, and AAVI…LKYC.

This sequence belongs to the NhaA Na(+)/H(+) (TC 2.A.33) antiporter family.

The protein localises to the cell inner membrane. The catalysed reaction is Na(+)(in) + 2 H(+)(out) = Na(+)(out) + 2 H(+)(in). In terms of biological role, na(+)/H(+) antiporter that extrudes sodium in exchange for external protons. This is Na(+)/H(+) antiporter NhaA from Rickettsia massiliae (strain Mtu5).